The sequence spans 411 residues: Keratin, type I cytoskeletal 12 (411 aa).

A head region spans residues 1–42 (DHDYEFPGIQAFAGLGMGFGGSPGGGSLYLPSGNDGGLLSGS). Residues 43-78 (EKETMQNLNDRLASYLDKVRALEDANAELENKIREW) are coil 1A. Positions 43–359 (EKETMQNLND…RLLDGEAQGD (317 aa)) constitute an IF rod domain. Residues 83 to 101 (GHGHGDCGPQHDYSKYHPL) form a linker 1 region. Residues 102 to 193 (IEDLRNKIIS…KNHEEELQSC (92 aa)) form a coil 1B region. A linker 12 region spans residues 194 to 216 (RAGGPGEVSVEMDAAPGVDLTRL). A coil 2 region spans residues 217 to 354 (LNDMRAQYEA…IETYRRLLDG (138 aa)). The interval 355 to 411 (EAQGDGLDESSAMTGSRSQAQSIDSSKDPSKTRKIKTIVQEVVNGEVVSSQVQEIQN) is tail. The disordered stretch occupies residues 356–387 (AQGDGLDESSAMTGSRSQAQSIDSSKDPSKTR). A compositionally biased stretch (polar residues) spans 365 to 378 (SAMTGSRSQAQSID).

The protein belongs to the intermediate filament family. Heterotetramer of two type I and two type II keratins. Keratin-3 associates with keratin-12. As to expression, cornea specific. Associated mainly with all layers of the central corneal epithelium and also found in the suprabasal limbal epithelium.

Functionally, involved in corneal epithelium organization, integrity and corneal keratin expression. The protein is Keratin, type I cytoskeletal 12 (KRT12) of Oryctolagus cuniculus (Rabbit).